A 144-amino-acid polypeptide reads, in one-letter code: 3-dehydroquinate dehydratase (144 aa).

Residue Tyr22 is the Proton acceptor of the active site. Substrate contacts are provided by Asn71, His77, and Asp84. His97 serves as the catalytic Proton donor. Residues 98–99 (IS) and Arg108 each bind substrate.

It belongs to the type-II 3-dehydroquinase family. As to quaternary structure, homododecamer.

The enzyme catalyses 3-dehydroquinate = 3-dehydroshikimate + H2O. Its pathway is metabolic intermediate biosynthesis; chorismate biosynthesis; chorismate from D-erythrose 4-phosphate and phosphoenolpyruvate: step 3/7. Its function is as follows. Catalyzes a trans-dehydration via an enolate intermediate. The chain is 3-dehydroquinate dehydratase from Thermotoga petrophila (strain ATCC BAA-488 / DSM 13995 / JCM 10881 / RKU-1).